Consider the following 56-residue polypeptide: Attractin (56 aa).

3 disulfide bridges follow: Cys4-Cys41, Cys13-Cys33, and Cys20-Cys26. Asn25 is a glycosylation site (N-linked (GlcNAc...) asparagine).

As to expression, produced by the albumen gland of the egg cordons.

The protein localises to the secreted. Water-borne pheromone that attract the marine mollusk Aplysia into breeding aggregations and coordinate male and female reproductive behavior within the aggregation. The polypeptide is Attractin (ATT) (Aplysia depilans (Sea hare)).